We begin with the raw amino-acid sequence, 404 residues long: Cysteine desulfurase IscS (404 aa).

Pyridoxal 5'-phosphate contacts are provided by residues 75–76, asparagine 155, glutamine 183, and 203–205; these read AT and SAH. At lysine 206 the chain carries N6-(pyridoxal phosphate)lysine. Threonine 243 is a binding site for pyridoxal 5'-phosphate. Cysteine 328 acts as the Cysteine persulfide intermediate in catalysis. Cysteine 328 serves as a coordination point for [2Fe-2S] cluster.

It belongs to the class-V pyridoxal-phosphate-dependent aminotransferase family. NifS/IscS subfamily. In terms of assembly, homodimer. Forms a heterotetramer with IscU, interacts with other sulfur acceptors. It depends on pyridoxal 5'-phosphate as a cofactor.

The protein resides in the cytoplasm. The catalysed reaction is (sulfur carrier)-H + L-cysteine = (sulfur carrier)-SH + L-alanine. Its pathway is cofactor biosynthesis; iron-sulfur cluster biosynthesis. Functionally, master enzyme that delivers sulfur to a number of partners involved in Fe-S cluster assembly, tRNA modification or cofactor biosynthesis. Catalyzes the removal of elemental sulfur atoms from cysteine to produce alanine. Functions as a sulfur delivery protein for Fe-S cluster synthesis onto IscU, an Fe-S scaffold assembly protein, as well as other S acceptor proteins. In Pseudomonas putida (strain W619), this protein is Cysteine desulfurase IscS.